The sequence spans 178 residues: Large ribosomal subunit protein uL6 (178 aa).

The protein belongs to the universal ribosomal protein uL6 family. As to quaternary structure, part of the 50S ribosomal subunit.

In terms of biological role, this protein binds to the 23S rRNA, and is important in its secondary structure. It is located near the subunit interface in the base of the L7/L12 stalk, and near the tRNA binding site of the peptidyltransferase center. The polypeptide is Large ribosomal subunit protein uL6 (Helicobacter pylori (strain Shi470)).